A 506-amino-acid polypeptide reads, in one-letter code: Gamma-aminobutyric acid receptor subunit epsilon (506 aa).

Residues 1 to 22 (MLSKVLPVLLGILLILQSRVEG) form the signal peptide. The disordered stretch occupies residues 23–66 (PQTESKNEASSRDVVYGPQPQPLENQLLSEETKSTETETGSRVG). The Extracellular portion of the chain corresponds to 23-280 (PQTESKNEAS…FNVSRRFGYV (258 aa)). An N-linked (GlcNAc...) asparagine glycan is attached at Asn134. A disulfide bond links Cys195 and Cys209. N-linked (GlcNAc...) asparagine glycosylation is present at Asn252. The helical transmembrane segment at 281–301 (AFQNYVPSSVTTMLSWVSFWI) threads the bilayer. Over 302–307 (KTESAP) the chain is Cytoplasmic. The chain crosses the membrane as a helical span at residues 308–327 (ARTSLGITSVLTMTTLGTFS). At 328-343 (RKNFPRVSYITALDFY) the chain is on the extracellular side. A helical membrane pass occupies residues 344 to 364 (IAICFVFCFCALLEFAVLNFL). Residues 365–485 (IYNQTKAHAS…HVYRLDNYSR (121 aa)) are Cytoplasmic-facing. Residues 413 to 438 (EGSDGEERPSCSAQQPPSPGSPEGPR) are disordered. A helical transmembrane segment spans residues 486–506 (VVFPVTFFFFNVLYWLVCLNL).

This sequence belongs to the ligand-gated ion channel (TC 1.A.9) family. Gamma-aminobutyric acid receptor (TC 1.A.9.5) subfamily. GABRE sub-subfamily. Heteropentamer, formed by a combination of alpha (GABRA1-6), beta (GABRB1-3), gamma (GABRG1-3), delta (GABRD), epsilon (GABRE), rho (GABRR1-3), pi (GABRP) and theta (GABRQ) chains, each subunit exhibiting distinct physiological and pharmacological properties. In terms of tissue distribution, expressed in many tissues. Highest levels of expression in adult heart and placenta.

Its subcellular location is the cell membrane. It localises to the postsynaptic cell membrane. The catalysed reaction is chloride(in) = chloride(out). Potentiated by pentobarbital, loreclezole, and lanthanum and inhibited by zinc and furosemide. Introduction of the epsilon subunit to the receptor complex resulted in diminished modulatory effects by etomidate, propofol, pregnanolone and flurazepam. In terms of biological role, epsilon subunit of the heteropentameric ligand-gated chloride channel gated by gamma-aminobutyric acid (GABA), a major inhibitory neurotransmitter in the brain. GABA-gated chloride channels, also named GABA(A) receptors (GABAAR), consist of five subunits arranged around a central pore and contain GABA active binding site(s) located at the alpha and beta subunit interfaces. When activated by GABA, GABAARs selectively allow the flow of chloride anions across the cell membrane down their electrochemical gradient. GABAARs containing epsilon subunits also permit spontaneous chloride channel activity while preserving the structural information required for GABA-gated openings. GABARs containing epsilon subunit may regulate cardiac function. The polypeptide is Gamma-aminobutyric acid receptor subunit epsilon (Homo sapiens (Human)).